Here is a 210-residue protein sequence, read N- to C-terminus: Thymidylate kinase (210 aa).

11–18 serves as a coordination point for ATP; sequence GLEGAGKS.

This sequence belongs to the thymidylate kinase family.

It carries out the reaction dTMP + ATP = dTDP + ADP. Phosphorylation of dTMP to form dTDP in both de novo and salvage pathways of dTTP synthesis. This Vibrio campbellii (strain ATCC BAA-1116) protein is Thymidylate kinase.